Consider the following 402-residue polypeptide: Protein HAIKU1 (402 aa).

4 disordered regions span residues 1 to 44, 63 to 135, 160 to 266, and 346 to 402; these read MDRP…LQTQ, TGSP…QQPM, SSLG…LVPS, and QPLT…WNDY. Residues 24 to 44 are compositionally biased toward polar residues; sequence LHQSTFAASTSNGAAPRLQTQ. A VQ motif is present at residues 55–64; sequence FRSIVQQLTG. The span at 76 to 87 shows a compositional bias: polar residues; that stretch reads QNNSLRPQNTRL. A compositionally biased stretch (pro residues) spans 103 to 113; sequence VPLPSMAPPQS. Residues 160–173 are compositionally biased toward polar residues; that stretch reads SSLGDSGPNANQMQ. Over residues 218–240 the composition is skewed to low complexity; that stretch reads MPAQSQSQSQPQPQPQPQQHMMP. Residues 257 to 266 are compositionally biased toward pro residues; the sequence is YLPPPGLVPS. Over residues 349-358 the composition is skewed to polar residues; that stretch reads TPNFSFSQIA. The segment covering 371–380 has biased composition (pro residues); that stretch reads QGPPQPPPSP. Residues 381–390 are compositionally biased toward low complexity; that stretch reads GLMFPLSPSG.

As to quaternary structure, interacts with WRKY10. Interacts with MPK6.

The protein resides in the nucleus. Its function is as follows. Modulates seed size by negatively regulating the cellularization of syncytial endosperm. May function by binding and modulating the activity of WRKY10 transcription factor. In Arabidopsis thaliana (Mouse-ear cress), this protein is Protein HAIKU1.